Reading from the N-terminus, the 250-residue chain is Myelin basic protein (250 aa).

A compositionally biased stretch (basic and acidic residues) spans 1-28 (MGNHSGKRELSAEKASKDGEIHRGEAGK). The segment at 1–150 (MGNHSGKREL…SQRSKYLATA (150 aa)) is disordered. At Gly-2 the chain carries N-acetylalanine. Ser-31 and Ser-40 each carry phosphoserine. The segment covering 95 to 113 (FSRDAPGREDNTFKDRPSE) has biased composition (basic and acidic residues). At Ser-96 the chain carries Phosphothreonine. Glu-113 is modified (phosphoserine). A Phosphothreonine modification is found at Glu-122. Phosphotyrosine is present on Thr-125. Residues Ala-135, Arg-139, Ser-141, and Ser-144 each carry the phosphoserine modification. Tyr-146 and Leu-147 each carry phosphotyrosine. At Thr-149 the chain carries Phosphothreonine. Residue Ser-151 is modified to Phosphoserine. Ser-151 is subject to Phosphotyrosine. Thr-152 carries the phosphothreonine modification. 2 positions are modified to citrulline: Arg-157 and Arg-163. At Thr-167 the chain carries Phosphothreonine. Ser-172 carries the post-translational modification Phosphoserine. Residues Arg-175 and Arg-181 each carry the omega-N-methylarginine modification. The disordered stretch occupies residues 175-250 (RFFSGDRGAP…SRSGSPMARR (76 aa)). Ser-188 bears the Phosphoserine mark. At Thr-197 the chain carries Phosphothreonine. The span at 197-206 (THYGSLPQKS) shows a compositional bias: polar residues. Tyr-199 is subject to Phosphotyrosine. At Ser-206 the chain carries Phosphoserine. Thr-211, Thr-226, and Thr-229 each carry phosphothreonine. Residue Gln-234 is modified to Deamidated glutamine. At Arg-239 the chain carries Citrulline. The residue at position 241 (Ser-241) is a Phosphoserine. At Ser-245 the chain carries Phosphoserine; by UHMK1. Citrulline is present on Arg-250.

Belongs to the myelin basic protein family. Homodimer. As in other animals, several charge isomers may be produced as a result of optional post-translational modifications, such as phosphorylation of serine or threonine residues, deamidation of glutamine or asparagine residues, citrullination and methylation of arginine residues. In terms of processing, methylated on arginine residues; decreases with the age of the animal, making MBP more cationic. Post-translationally, phosphorylated by TAOK2, VRK2, MAPK11, MAPK12, MAPK14 and MINK1. Proteolytically cleaved in B cell lysosomes by cathepsin CTSG which degrades the major immunogenic MBP epitope and prevents the activation of MBP-specific autoreactive T cells. In the embryo, isoform 1-isoform 3 are found in neurons within the central nervous system (primarily in pioneer neurons important in the formation of the cortex) and the peripheral nervous system. They are also expressed in the thymus, gut, lung and kidney. In the adult, isoform 1-isoform 3 are highly expressed in the brain (mainly in brain regions rich in oligodendrocytes) and spleen. Lower levels are seen in the heart, kidney and lung. Isoform 2 is also found in cells of the immune system. The isoforms missing the 134 first amino acids (isoform 4-isoform 13) are almost exclusively produced in the myelin-forming cells, the mature oligodendrocytes.

It localises to the myelin membrane. Its subcellular location is the cytoplasm. The protein localises to the nucleus. Functionally, the classic group of MBP isoforms (isoform 4-isoform 13) are with PLP the most abundant protein components of the myelin membrane in the CNS. They have a role in both its formation and stabilization. The non-classic group of MBP isoforms (isoform 1-isoform 3/Golli-MBPs) may preferentially have a role in the early developing brain long before myelination, maybe as components of transcriptional complexes, and may also be involved in signaling pathways in T-cells and neural cells. Differential splicing events combined to optional post-translational modifications give a wide spectrum of isomers, with each of them potentially having a specialized function. The sequence is that of Myelin basic protein (Mbp) from Mus musculus (Mouse).